A 403-amino-acid polypeptide reads, in one-letter code: Multifunctional CCA protein (403 aa).

ATP contacts are provided by Gly8 and Arg11. CTP contacts are provided by Gly8 and Arg11. Mg(2+) contacts are provided by Asp21 and Asp23. 3 residues coordinate ATP: Arg91, Arg137, and Arg140. Residues Arg91, Arg137, and Arg140 each contribute to the CTP site. In terms of domain architecture, HD spans 228-329; the sequence is TGIHTLMVAK…LKVLGLLDVW (102 aa).

It belongs to the tRNA nucleotidyltransferase/poly(A) polymerase family. Bacterial CCA-adding enzyme type 1 subfamily. In terms of assembly, monomer. Can also form homodimers and oligomers. Mg(2+) is required as a cofactor. It depends on Ni(2+) as a cofactor.

It catalyses the reaction a tRNA precursor + 2 CTP + ATP = a tRNA with a 3' CCA end + 3 diphosphate. It carries out the reaction a tRNA with a 3' CCA end + 2 CTP + ATP = a tRNA with a 3' CCACCA end + 3 diphosphate. Its function is as follows. Catalyzes the addition and repair of the essential 3'-terminal CCA sequence in tRNAs without using a nucleic acid template. Adds these three nucleotides in the order of C, C, and A to the tRNA nucleotide-73, using CTP and ATP as substrates and producing inorganic pyrophosphate. tRNA 3'-terminal CCA addition is required both for tRNA processing and repair. Also involved in tRNA surveillance by mediating tandem CCA addition to generate a CCACCA at the 3' terminus of unstable tRNAs. While stable tRNAs receive only 3'-terminal CCA, unstable tRNAs are marked with CCACCA and rapidly degraded. The sequence is that of Multifunctional CCA protein from Vibrio cholerae serotype O1 (strain ATCC 39541 / Classical Ogawa 395 / O395).